A 238-amino-acid polypeptide reads, in one-letter code: tRNA (guanine-N(1)-)-methyltransferase (238 aa).

S-adenosyl-L-methionine contacts are provided by residues Gly-109 and 129 to 134 (IGDFVL).

Belongs to the RNA methyltransferase TrmD family. In terms of assembly, homodimer.

Its subcellular location is the cytoplasm. The enzyme catalyses guanosine(37) in tRNA + S-adenosyl-L-methionine = N(1)-methylguanosine(37) in tRNA + S-adenosyl-L-homocysteine + H(+). Functionally, specifically methylates guanosine-37 in various tRNAs. The sequence is that of tRNA (guanine-N(1)-)-methyltransferase from Exiguobacterium sp. (strain ATCC BAA-1283 / AT1b).